The sequence spans 626 residues: MDEQEALNSIMNDLVALQMNRRHRMPGYETMKNKDTGHSNRQSDVRIKFEHNGERRIIAFSRPVKYEDVEHKVTTVFGQPLDLHYMNNELSILLKNQDDLDKAIDILDRSSSMKSLRILLLSQDRNHNSSSPHSGVSRQVRIKASQSAGDINTIYQPPEPRSRHLSVSSQNPGRSSPPPGYVPERQQHIARQGSYTSINSEGEFIPETSEQCMLDPLSSAENSLSGSCQSLDRSADSPSFRKSRMSRAQSFPDNRQEYSDRETQLYDKGVKGGTYPRRYHVSVHHKDYSDGRRTFPRIRRHQGNLFTLVPSSRSLSTNGENMGLAVQYLDPRGRLRSADSENALSVQERNVPTKSPSAPINWRRGKLLGQGAFGRVYLCYDVDTGRELASKQVQFDPDSPETSKEVSALECEIQLLKNLQHERIVQYYGCLRDRAEKTLTIFMEYMPGGSVKDQLKAYGALTESVTRKYTRQILEGMSYLHSNMIVHRDIKGANILRDSAGNVKLGDFGASKRLQTICMSGTGMRSVTGTPYWMSPEVISGEGYGRKADVWSLGCTVVEMLTEKPPWAEYEAMAAIFKIATQPTNPQLPSHISEHGRDFLRRIFVEARQRPSAEELLTHHFAQLMY.

Residues 44 to 123 enclose the PB1 domain; that stretch reads DVRIKFEHNG…KSLRILLLSQ (80 aa). Polar residues-rich tracts occupy residues 146–155, 165–174, and 219–232; these read QSAGDINTIY, LSVSSQNPGR, and SAENSLSGSCQSLD. Disordered stretches follow at residues 146-184 and 218-262; these read QSAGDINTIYQPPEPRSRHLSVSSQNPGRSSPPPGYVPE and SSAE…SDRE. A Phosphoserine modification is found at serine 147. Phosphoserine; by SGK1 is present on serine 166. A phosphoserine mark is found at serine 250 and serine 312. Phosphoserine; by SGK1 is present on serine 337. Serine 340 is modified (phosphoserine). The 261-residue stretch at 362-622 folds into the Protein kinase domain; sequence WRRGKLLGQG…AEELLTHHFA (261 aa). Residues 368 to 376 and lysine 391 contribute to the ATP site; that span reads LGQGAFGRV. Aspartate 489 acts as the Proton acceptor in catalysis.

Belongs to the protein kinase superfamily. STE Ser/Thr protein kinase family. MAP kinase kinase kinase subfamily. As to quaternary structure, binds both upstream activators and downstream substrates in multimolecular complexes. Part of a complex with MAP2K3, RAC1 and CCM2. Interacts with MAP2K5 and SPAG9. The cofactor is Mg(2+). In terms of processing, phosphorylation at Ser-166 and Ser-337 by SGK1 inhibits its activity.

It carries out the reaction L-seryl-[protein] + ATP = O-phospho-L-seryl-[protein] + ADP + H(+). The enzyme catalyses L-threonyl-[protein] + ATP = O-phospho-L-threonyl-[protein] + ADP + H(+). With respect to regulation, activated by phosphorylation on Thr-530. Its function is as follows. Component of a protein kinase signal transduction cascade. Mediates activation of the NF-kappa-B, AP1 and DDIT3 transcriptional regulators. The polypeptide is Mitogen-activated protein kinase kinase kinase 3 (MAP3K3) (Homo sapiens (Human)).